We begin with the raw amino-acid sequence, 363 residues long: Ribosomal RNA large subunit methyltransferase M (363 aa).

Residues Ser194, Cys227–Gly230, Asp246, Asp266, and Asp284 each bind S-adenosyl-L-methionine. Lys313 functions as the Proton acceptor in the catalytic mechanism.

It belongs to the class I-like SAM-binding methyltransferase superfamily. RNA methyltransferase RlmE family. RlmM subfamily. As to quaternary structure, monomer.

Its subcellular location is the cytoplasm. The enzyme catalyses cytidine(2498) in 23S rRNA + S-adenosyl-L-methionine = 2'-O-methylcytidine(2498) in 23S rRNA + S-adenosyl-L-homocysteine + H(+). In terms of biological role, catalyzes the 2'-O-methylation at nucleotide C2498 in 23S rRNA. This Haemophilus influenzae (strain ATCC 51907 / DSM 11121 / KW20 / Rd) protein is Ribosomal RNA large subunit methyltransferase M.